The primary structure comprises 288 residues: Scolexin B (288 aa).

The first 20 residues, 1-20 (MFASKLAVCSALALLAVAHA), serve as a signal peptide directing secretion. In terms of domain architecture, Peptidase S1 spans 21–287 (APGGNDIQKI…VRDWIKKVTN (267 aa)). A disordered region spans residues 27–56 (IQKITKAPNVPTKAEGDAASKASAPAIPPK). A disulfide bridge connects residues C72 and C88. Residues H87 and D145 each act as charge relay system in the active site. 2 disulfides stabilise this stretch: C210–C223 and C235–C264. S239 acts as the Charge relay system in catalysis.

Belongs to the peptidase S1 family.

This is Scolexin B from Heliothis virescens (Tobacco budworm moth).